A 393-amino-acid chain; its full sequence is Dual-specificity RNA methyltransferase RlmN (393 aa).

Residue glutamate 114 is the Proton acceptor of the active site. The Radical SAM core domain maps to glutamate 120 to aspartate 359. Cysteines 127 and 364 form a disulfide. Residues cysteine 134, cysteine 138, and cysteine 141 each contribute to the [4Fe-4S] cluster site. S-adenosyl-L-methionine contacts are provided by residues glycine 188–glutamate 189, serine 220, serine 242–histidine 244, and asparagine 321. The active-site S-methylcysteine intermediate is cysteine 364.

It belongs to the radical SAM superfamily. RlmN family. Requires [4Fe-4S] cluster as cofactor.

It localises to the cytoplasm. It carries out the reaction adenosine(2503) in 23S rRNA + 2 reduced [2Fe-2S]-[ferredoxin] + 2 S-adenosyl-L-methionine = 2-methyladenosine(2503) in 23S rRNA + 5'-deoxyadenosine + L-methionine + 2 oxidized [2Fe-2S]-[ferredoxin] + S-adenosyl-L-homocysteine. The catalysed reaction is adenosine(37) in tRNA + 2 reduced [2Fe-2S]-[ferredoxin] + 2 S-adenosyl-L-methionine = 2-methyladenosine(37) in tRNA + 5'-deoxyadenosine + L-methionine + 2 oxidized [2Fe-2S]-[ferredoxin] + S-adenosyl-L-homocysteine. In terms of biological role, specifically methylates position 2 of adenine 2503 in 23S rRNA and position 2 of adenine 37 in tRNAs. m2A2503 modification seems to play a crucial role in the proofreading step occurring at the peptidyl transferase center and thus would serve to optimize ribosomal fidelity. The sequence is that of Dual-specificity RNA methyltransferase RlmN from Actinobacillus pleuropneumoniae serotype 5b (strain L20).